A 687-amino-acid polypeptide reads, in one-letter code: Fork-head transcriptional regulator 2 (687 aa).

The tract at residues 1–23 is disordered; sequence MSAQFITPKKRPHSPLDSNELLP. One can recognise an FHA domain in the interval 82–146; sequence VSIGRNIELS…NGARIDGQKV (65 aa). Polar residues predominate over residues 226-241; sequence SPSSISANSLQSNLDQ. The segment at 226 to 246 is disordered; the sequence is SPSSISANSLQSNLDQDLSKE. Positions 252 to 350 form a DNA-binding region, fork-head; sequence KPPYSYATMI…SDGTISKTRR (99 aa). Disordered stretches follow at residues 385–449, 472–569, and 584–687; these read AASI…RYTP, QLGR…IGLN, and PERG…MIDS. Over residues 389-410 the composition is skewed to low complexity; it reads PQQQKQQQQQQKRPPQQQNSQP. The span at 411 to 442 shows a compositional bias: polar residues; sequence HLSQPHYTIPSNPMQTNSMGYIPQSNIYNMSN. Over residues 472–490 the composition is skewed to low complexity; it reads QLGRPQGQLGQPMMQPQQQ. Positions 491–540 are enriched in polar residues; that stretch reads SYTSSNIKTEPSSPKRNPSISNNTPKMAKGTVSTESHSRSTSYTTTQLHE. Composition is skewed to low complexity over residues 542–563 and 589–624; these read SNFN…TTTN and KGNP…PNTN. The span at 625–659 shows a compositional bias: polar residues; it reads QSSPAFWNFVQFSTPNGQSPVRKSSEEVGNNSPTL. The Nuclear localization signal motif lies at 663–670; sequence IKREREND.

The protein resides in the nucleus. In terms of biological role, transcription factor required for the morphogenesis of true hyphal as well as yeast cells. Contributes to virulence. The polypeptide is Fork-head transcriptional regulator 2 (FKH2) (Candida albicans (strain SC5314 / ATCC MYA-2876) (Yeast)).